A 241-amino-acid polypeptide reads, in one-letter code: Deoxynucleotide monophosphate kinase (241 aa).

K10 contacts dGMP. ATP contacts are provided by R11, G13, D15, and T16. The dGMP site is built by I36 and K37. Y42 is a binding site for Mg(2+). R68 is a binding site for dGMP. Mg(2+) is bound by residues Q85 and E108. The dGMP site is built by R132, G139, T140, V144, W152, D175, R177, Q178, E181, and T208.

This sequence belongs to the dNMP kinase family. Homodimer. The cofactor is Mg(2+).

The enzyme catalyses dTMP + ATP = dTDP + ADP. The catalysed reaction is dGMP + ATP = dGDP + ADP. It catalyses the reaction 5-hydroxymethyl-dCMP + ATP = 5-hydroxymethyl-dCDP + ADP. Inhibited by pyridoxal 5'-phosphate and diethylpyrocarbonate. Its function is as follows. Allows the synthesis of deoxyribonucleoside triphosphates necessary for the rapid viral DNA replication. Phosphorylates dGMP, dTMP and 5-hydroxymethyl-dCMP (hmdCMP) while excluding dCMP and dAMP. The phosphorylation of 5-hydroxymethyl-dCMP represents the first step in the replacement of cytosine by hydroxymethylcytosine in new viral DNA genomes. The protein is Deoxynucleotide monophosphate kinase (1) of Enterobacteria phage T4 (Bacteriophage T4).